The chain runs to 495 residues: L-2,4-diaminobutyrate decarboxylase (495 aa).

The residue at position 312 (lysine 312) is an N6-(pyridoxal phosphate)lysine.

The protein belongs to the group II decarboxylase family. Requires pyridoxal 5'-phosphate as cofactor.

The catalysed reaction is L-2,4-diaminobutanoate + H(+) = propane-1,3-diamine + CO2. It functions in the pathway siderophore biosynthesis; rhizobactin biosynthesis. This is L-2,4-diaminobutyrate decarboxylase (rhbB) from Rhizobium meliloti (strain 1021) (Ensifer meliloti).